Here is a 612-residue protein sequence, read N- to C-terminus: UvrABC system protein C (612 aa).

In terms of domain architecture, GIY-YIG spans 20 to 98 (THSGVYRMLD…IKQHRPKYNI (79 aa)). A UVR domain is found at 208 to 243 (SSVLEEISAKMYQASEDMEYEKAQVYRDQLVVLRKL).

Belongs to the UvrC family. Interacts with UvrB in an incision complex.

The protein resides in the cytoplasm. Its function is as follows. The UvrABC repair system catalyzes the recognition and processing of DNA lesions. UvrC both incises the 5' and 3' sides of the lesion. The N-terminal half is responsible for the 3' incision and the C-terminal half is responsible for the 5' incision. The polypeptide is UvrABC system protein C (Francisella tularensis subsp. mediasiatica (strain FSC147)).